The following is an 88-amino-acid chain: Auxin-responsive protein SAUR21 (88 aa).

Belongs to the ARG7 family.

The protein localises to the cell membrane. Functionally, functions as a positive effector of cell expansion through modulation of auxin transport. This Arabidopsis thaliana (Mouse-ear cress) protein is Auxin-responsive protein SAUR21.